Reading from the N-terminus, the 122-residue chain is Small ribosomal subunit protein uS13 (122 aa).

The interval 95–122 (GLPVRGQRTHTNARTRKGPAKPIAGKKK) is disordered.

Belongs to the universal ribosomal protein uS13 family. In terms of assembly, part of the 30S ribosomal subunit. Forms a loose heterodimer with protein S19. Forms two bridges to the 50S subunit in the 70S ribosome.

Located at the top of the head of the 30S subunit, it contacts several helices of the 16S rRNA. In the 70S ribosome it contacts the 23S rRNA (bridge B1a) and protein L5 of the 50S subunit (bridge B1b), connecting the 2 subunits; these bridges are implicated in subunit movement. Contacts the tRNAs in the A and P-sites. The protein is Small ribosomal subunit protein uS13 of Caulobacter vibrioides (strain ATCC 19089 / CIP 103742 / CB 15) (Caulobacter crescentus).